A 357-amino-acid chain; its full sequence is MRSLSCIVCRQKKIKCDRKNPCTNCEQAGEKCMFKEYDSRKIRHPHSYVKALETRLAGLEAFWKRVKYAPVNEKLELLKTISFNDHLSPDISVSKTDTTFEFPVSLDIRGPNTIAFYGPTNVYGPPLTPSSPETPSFPPQNPSFSPLITDCLKLFFKWQYPQFLFINREAFLVDYYYRYHEGRYCSEHLLYAMCAIGSRMSVDPNIAALAKNFYQIAWNKIIEYGLGKSHITSIQCLLCLGYFNIGMGNTSLGWMLSGMAFRMGQDLGFQLNPRNWSVNDHPVVSPADAAVRSRIYWGSYVTDIFISFVLGRPTTLKKSDTSIPDSESLPDFDGVNEYRVNNALLLKEYLCIQSSVY.

The zn(2)-C6 fungal-type DNA-binding region spans 6–32 (CIVCRQKKIKCDRKNPCTNCEQAGEKC).

The protein localises to the nucleus. This is an uncharacterized protein from Schizosaccharomyces pombe (strain 972 / ATCC 24843) (Fission yeast).